We begin with the raw amino-acid sequence, 428 residues long: MEPLKVEKFATAKRGNGLRAVTPLRPGELLFRSDPLAYTVCKGSRGVVCDRCLLGKEKLMRCSQCRVAKYCSAKCQKKAWPDHKRECKCLKSCKPRYPPDSVRLLGRVVFKLMDGAPSESEKLYSFYDLESNINKLTEDKKEGLRQLVMTFQHFMREEIQDASQLPPAFDLFEAFAKVICNSFTICNAEMQEVGVGLYPSISLLNHSCDPNCSIVFNGPHLLLRAVRDIEVGEELTICYLDMLMTSEERRKQLRDQYCFECDCFRCQTQDKDADMLTGDEQVWKEVQESLKKIEELKAHWKWEQVLAMCQAIISSNSERLPDINIYQLKVLDCAMDACINLGLLEEALFYGTRTMEPYRIFFPGSHPVRGVQVMKVGKLQLHQGMFPQAMKNLRLAFDIMRVTHGREHSLIEDLILLLEECDANIRAS.

Position 1 is an N-acetylmethionine (M1). In terms of domain architecture, SET spans 4–240; the sequence is LKVEKFATAK…VGEELTICYL (237 aa). Residue 14–16 coordinates S-adenosyl-L-methionine; the sequence is RGN. Phosphothreonine is present on T22. Residues C49, C52, C62, C65, C71, C75, H83, and C87 each contribute to the Zn(2+) site. The MYND-type zinc-finger motif lies at 49 to 87; the sequence is CDRCLLGKEKLMRCSQCRVAKYCSAKCQKKAWPDHKREC. Residues Y124, N132, N181, 205-206, Y239, and F259 each bind S-adenosyl-L-methionine; that span reads NH. The tract at residues 272 to 428 is C-terminal domain; essential for histone methyltransferase activity, nuclear localization and mediates interaction with HSP90AA1; that stretch reads DADMLTGDEQ…EECDANIRAS (157 aa).

The protein belongs to the class V-like SAM-binding methyltransferase superfamily. Histone-lysine methyltransferase family. As to quaternary structure, interacts with HSPCA. Interacts with HELZ. Interacts with POLR2A; the interaction may be indirect and may be mediated by HELZ. Interacts with HSP90AA1; this interaction enhances SMYD3 histone-lysine N-methyltransferase. Expressed in skeletal muscles and testis. Overexpressed in a majority of colorectal and hepatocellular carcinomas.

Its subcellular location is the cytoplasm. The protein resides in the nucleus. The catalysed reaction is L-lysyl(4)-[histone H3] + 3 S-adenosyl-L-methionine = N(6),N(6),N(6)-trimethyl-L-lysyl(4)-[histone H3] + 3 S-adenosyl-L-homocysteine + 3 H(+). Histone methyltransferase activity strongly stimulated by HSPCA. Functionally, histone methyltransferase. Specifically methylates 'Lys-4' of histone H3, inducing di- and tri-methylation, but not monomethylation. Also methylates 'Lys-5' of histone H4. Plays an important role in transcriptional activation as a member of an RNA polymerase complex. Binds DNA containing 5'-CCCTCC-3' or 5'-GAGGGG-3' sequences. The protein is Histone-lysine N-methyltransferase SMYD3 (SMYD3) of Homo sapiens (Human).